A 309-amino-acid polypeptide reads, in one-letter code: Porphobilinogen deaminase (309 aa).

The residue at position 241 (C241) is an S-(dipyrrolylmethanemethyl)cysteine.

Belongs to the HMBS family. As to quaternary structure, monomer. It depends on dipyrromethane as a cofactor.

It catalyses the reaction 4 porphobilinogen + H2O = hydroxymethylbilane + 4 NH4(+). It functions in the pathway porphyrin-containing compound metabolism; protoporphyrin-IX biosynthesis; coproporphyrinogen-III from 5-aminolevulinate: step 2/4. Tetrapolymerization of the monopyrrole PBG into the hydroxymethylbilane pre-uroporphyrinogen in several discrete steps. The chain is Porphobilinogen deaminase from Bacillus cereus (strain AH187).